The following is a 105-amino-acid chain: Large ribosomal subunit protein uL24 (105 aa).

The protein belongs to the universal ribosomal protein uL24 family. In terms of assembly, part of the 50S ribosomal subunit.

Functionally, one of two assembly initiator proteins, it binds directly to the 5'-end of the 23S rRNA, where it nucleates assembly of the 50S subunit. One of the proteins that surrounds the polypeptide exit tunnel on the outside of the subunit. This Mycobacterium avium (strain 104) protein is Large ribosomal subunit protein uL24.